The primary structure comprises 410 residues: Serine/threonine transporter SstT (410 aa).

10 helical membrane passes run 15-35 (GSLVTQIMVGLVAGIALAWLS), 49-69 (FVNALKAVAPLLVLVLVISSI), 82-102 (PIVMLYLLSTFFAAVVAVVAS), 118-138 (IVPPSGILEVLHGLLMSMVTN), 142-162 (AVMKANYIGILVWAIGLGFAF), 190-210 (FAPVGIFGLVASILASTGFDA), 217-237 (LLGLLLGCMLLMALVFNPLLV), 299-319 (MAGASITITVLTLAAVHTLGI), 331-351 (LVASVCACGASGVAGGSLLLI), and 358-378 (FGIPNEIAMQVVAVGFIIGVL).

It belongs to the dicarboxylate/amino acid:cation symporter (DAACS) (TC 2.A.23) family.

It is found in the cell inner membrane. It carries out the reaction L-serine(in) + Na(+)(in) = L-serine(out) + Na(+)(out). The catalysed reaction is L-threonine(in) + Na(+)(in) = L-threonine(out) + Na(+)(out). In terms of biological role, involved in the import of serine and threonine into the cell, with the concomitant import of sodium (symport system). The protein is Serine/threonine transporter SstT of Erwinia tasmaniensis (strain DSM 17950 / CFBP 7177 / CIP 109463 / NCPPB 4357 / Et1/99).